Here is an 875-residue protein sequence, read N- to C-terminus: Neurotrypsin (875 aa).

The N-terminal stretch at 1–20 (MTLARFVLALMLGALPEVVG) is a signal peptide. Asn26 carries N-linked (GlcNAc...) asparagine glycosylation. Residues 29 to 88 (LHHSHRHSPPPGPHYPYYLPTQQRPPRTRPPPPLPRFPRPPRALPAQRPHALQAGHTPRP) form a disordered region. Positions 43–53 (YPYYLPTQQRP) are enriched in low complexity. Residues 56-71 (TRPPPPLPRFPRPPRA) are compositionally biased toward pro residues. The Kringle domain maps to 93-165 (CPAGEPWVSV…GKVDWGYCDC (73 aa)). 20 disulfide bridges follow: Cys93–Cys165, Cys109–Cys149, Cys138–Cys163, Cys195–Cys259, Cys208–Cys269, Cys239–Cys249, Cys305–Cys369, Cys318–Cys379, Cys349–Cys359, Cys412–Cys475, Cys425–Cys485, Cys455–Cys465, Cys525–Cys589, Cys538–Cys599, Cys569–Cys579, Cys619–Cys750, Cys661–Cys677, Cys765–Cys831, Cys794–Cys808, and Cys821–Cys850. SRCR domains follow at residues 170 to 271 (VRLR…TCSF), 280 to 381 (IRLA…SCTP), 387 to 487 (IRLA…ACYP), and 500 to 601 (VRLV…ICDY). The interval 619 to 630 (CGLRLLHRRQKR) is zymogen activation region. Residues 631 to 874 (IIGGKNSLRG…FVPWIKSVTK (244 aa)) enclose the Peptidase S1 domain. Catalysis depends on His676, which acts as the Charge relay system. Asn683 is a glycosylation site (N-linked (GlcNAc...) asparagine). Asp726 functions as the Charge relay system in the catalytic mechanism. Residue Ser825 is the Charge relay system of the active site.

This sequence belongs to the peptidase S1 family.

The protein localises to the secreted. In terms of biological role, plays a role in neuronal plasticity and the proteolytic action may subserve structural reorganizations associated with learning and memory operations. The sequence is that of Neurotrypsin (PRSS12) from Pan troglodytes (Chimpanzee).